A 406-amino-acid polypeptide reads, in one-letter code: Zinc finger protein 57 (406 aa).

The KRAB domain occupies 17-88 (VRYEDVAVSF…TCTGVFKGGP (72 aa)). The tract at residues 57-77 (ESKKKPQEPNPNLKDKDDDKS) is disordered. A C2H2-type 1; degenerate zinc finger spans residues 90–113 (FFCLTCGKCFKKNTFLFNHQFPVR). 2 consecutive C2H2-type zinc fingers follow at residues 140–162 (FFCNLCGKTYRDASGLSRHRRAH) and 168–190 (RSCPECGKCFRDQSEVNRHLKVH). The segment at 194 to 226 (KPVAGSHVKVHQNKPVASNQKQKGRVPPTTRES) is disordered. The C2H2-type 4 zinc finger occupies 270–292 (VYCPYCRITFTMRTCLLNHLKIH). The C2H2-type 5; degenerate zinc-finger motif lies at 318–337 (YNCPVCDSSFRGKESLLNHL). A disordered region spans residues 372 to 406 (SRKRRRKRISSDSSETEGPSGSDEVMEVDTDSDLS). Residues 395-406 (EVMEVDTDSDLS) are compositionally biased toward acidic residues.

This sequence belongs to the krueppel C2H2-type zinc-finger protein family. Expressed in oligodendrocytes and at lower levels in astrocytes.

It is found in the nucleus. Functionally, transcription regulator required to maintain maternal and paternal gene imprinting, a process by which gene expression is restricted in a parent of origin-specific manner by epigenetic modification of genomic DNA and chromatin, including DNA methylation. Acts by controlling DNA methylation during the earliest multicellular stages of development at multiple imprinting control regions (ICRs). Acts together with ZNF445. Required for the establishment of maternal methylation imprints at SNRPN locus. Acts as a transcriptional repressor in Schwann cells. Binds to a 5'-TGCCGC-3' consensus sequence and recognizes the methylated CpG within this element. This chain is Zinc finger protein 57 (Zfp57), found in Rattus norvegicus (Rat).